The following is a 143-amino-acid chain: Fluoride-specific ion channel FluC (143 aa).

The next 4 helical transmembrane spans lie at 6 to 26 (CILV…VSVL), 38 to 58 (TILI…LTLA), 70 to 90 (LFVM…SLQT), and 103 to 123 (MVNV…GHVV). Positions 78 and 81 each coordinate Na(+).

The protein belongs to the fluoride channel Fluc/FEX (TC 1.A.43) family.

The protein resides in the cell inner membrane. It catalyses the reaction fluoride(in) = fluoride(out). Na(+) is not transported, but it plays an essential structural role and its presence is essential for fluoride channel function. In terms of biological role, fluoride-specific ion channel. Important for reducing fluoride concentration in the cell, thus reducing its toxicity. The chain is Fluoride-specific ion channel FluC from Methylobacterium radiotolerans (strain ATCC 27329 / DSM 1819 / JCM 2831 / NBRC 15690 / NCIMB 10815 / 0-1).